The chain runs to 566 residues: Viral IRF3-like protein (566 aa).

2 disordered regions span residues 151–170 (PRPF…PAFC) and 176–236 (QTGA…VHTD).

Belongs to the IRF family. As to quaternary structure, interacts with host SKP2. Interacts with host USP7.

Its function is as follows. Plays a role in the inhibition of host immune response. Interferes with the transactivating potential of cellular IRFs IRF3 and IRF7 that play a critical role in the induction of IFNA and IFNB genes. Additionally, interferes with surface major histocompatibility complex class II (MHC-II) antigen presentation. The chain is Viral IRF3-like protein (vIRF-3) from Human herpesvirus 8 type P (isolate GK18) (HHV-8).